Consider the following 313-residue polypeptide: Phenylalanine-4-hydroxylase (313 aa).

Residues His154, His159, and Glu200 each coordinate Fe cation.

This sequence belongs to the biopterin-dependent aromatic amino acid hydroxylase family. Fe(2+) serves as cofactor.

It catalyses the reaction (6R)-L-erythro-5,6,7,8-tetrahydrobiopterin + L-phenylalanine + O2 = (4aS,6R)-4a-hydroxy-L-erythro-5,6,7,8-tetrahydrobiopterin + L-tyrosine. Its pathway is amino-acid degradation; L-phenylalanine degradation; acetoacetate and fumarate from L-phenylalanine: step 1/6. In Ralstonia nicotianae (strain ATCC BAA-1114 / GMI1000) (Ralstonia solanacearum), this protein is Phenylalanine-4-hydroxylase (phhA).